The primary structure comprises 241 residues: MTESNDTPIQTEEGDERQHRRIKSFVMRAGRMTEGQQRGLDQGAPKFVLPLADAPVDFDQVFGRSAPRSLEIGFGMGHSLLEMAAAAPEQDFIGVEVHRPGVGALLNGVLTQGLTNLRVYDCDAIEVLNRCIADNSLDRLMLFFPDPWHKSRHHKRRIVQASFAELVRSKLKVGGILHMATDWEPYAEYMLEVMNVAPGYRNLAEDGKCVPRPAERPITKFERRGERLGHGVWDLKFEKLA.

The span at methionine 1 to glutamine 10 shows a compositional bias: polar residues. The interval methionine 1–arginine 20 is disordered. 4 residues coordinate S-adenosyl-L-methionine: glutamate 71, glutamate 96, aspartate 123, and aspartate 146. Aspartate 146 is an active-site residue. Substrate is bound by residues lysine 150, aspartate 182, and threonine 219–glutamate 222.

This sequence belongs to the class I-like SAM-binding methyltransferase superfamily. TrmB family.

It carries out the reaction guanosine(46) in tRNA + S-adenosyl-L-methionine = N(7)-methylguanosine(46) in tRNA + S-adenosyl-L-homocysteine. The protein operates within tRNA modification; N(7)-methylguanine-tRNA biosynthesis. Catalyzes the formation of N(7)-methylguanine at position 46 (m7G46) in tRNA. In Pseudomonas fluorescens (strain Pf0-1), this protein is tRNA (guanine-N(7)-)-methyltransferase.